The following is a 330-amino-acid chain: MKVLWAALVVALLAGCWADVEPESPLQGKPEPELEPELEPKRELEQEVEAEAGWQAGQPWELALARFWDYLRWVQTLSDQVQEDMLSNQVTQELTTLMEETMKEIKAYRAELEEQLGPMASETQARVAKELQAAQARLRSDMEDVRTRLTQYRGEVQAMLGQSTEELRARFASHMRKLRKRVLRDAEDLQKRLAVYRAGVREGAERSVSSIRERLWPLLEQARTRHANLATQPLRERVDALGQQLRGRLEEVGSRARSHLDEVREQMEEVQAKMEEQANQMRQQVEAFQARLKSWFEPLVEDMQRQWAGLVEKVQVAVGTSPTTPPLETK.

The N-terminal stretch at 1–18 (MKVLWAALVVALLAGCWA) is a signal peptide. The segment at 21–43 (EPESPLQGKPEPELEPELEPKRE) is disordered. Repeat copies occupy residues 96 to 117 (TLME…EQLG), 118 to 139 (PMAS…ARLR), 140 to 161 (SDME…AMLG), 162 to 183 (QSTE…KRVL), 184 to 205 (RDAE…EGAE), 206 to 227 (RSVS…TRHA), and 247 to 268 (GRLE…EQME). Residues 96–268 (TLMEETMKEI…HLDEVREQME (173 aa)) are 7 X 22 AA approximate tandem repeats. Methionine sulfoxide is present on Met-159. Ser-163 is subject to Phosphoserine. Residues 174 to 184 (HMRKLRKRVLR) form an LDL and other lipoprotein receptors binding region. Position 178–181 (178–181 (LRKR)) interacts with heparin. Residues 226–303 (HANLATQPLR…SWFEPLVEDM (78 aa)) are lipid-binding and lipoprotein association. Residue 242-249 (GQQLRGRL) coordinates heparin. A homooligomerization region spans residues 279–330 (NQMRQQVEAFQARLKSWFEPLVEDMQRQWAGLVEKVQVAVGTSPTTPPLETK). The specificity for association with VLDL stretch occupies residues 291-303 (RLKSWFEPLVEDM).

It belongs to the apolipoprotein A1/A4/E family. As to quaternary structure, homotetramer. May interact with ABCA1; functionally associated with ABCA1 in the biogenesis of HDLs. May interact with APP/A4 amyloid-beta peptide; the interaction is extremely stable in vitro but its physiological significance is unclear. May interact with MAPT. May interact with MAP2. In the cerebrospinal fluid, interacts with secreted SORL1. Interacts with PMEL; this allows the loading of PMEL luminal fragment on ILVs to induce fibril nucleation. In terms of processing, APOE exists as multiple glycosylated and sialylated glycoforms within cells and in plasma. The extent of glycosylation and sialylation are tissue and context specific. Glycated in plasma VLDL. Post-translationally, phosphorylated by FAM20C in the extracellular medium.

The protein localises to the secreted. It is found in the extracellular space. The protein resides in the extracellular matrix. Its subcellular location is the extracellular vesicle. It localises to the endosome. The protein localises to the multivesicular body. In terms of biological role, APOE is an apolipoprotein, a protein associating with lipid particles, that mainly functions in lipoprotein-mediated lipid transport between organs via the plasma and interstitial fluids. APOE is a core component of plasma lipoproteins and is involved in their production, conversion and clearance. Apolipoproteins are amphipathic molecules that interact both with lipids of the lipoprotein particle core and the aqueous environment of the plasma. As such, APOE associates with chylomicrons, chylomicron remnants, very low density lipoproteins (VLDL) and intermediate density lipoproteins (IDL) but shows a preferential binding to high-density lipoproteins (HDL). It also binds a wide range of cellular receptors including the LDL receptor/LDLR, the LDL receptor-related proteins LRP1, LRP2 and LRP8 and the very low-density lipoprotein receptor/VLDLR that mediate the cellular uptake of the APOE-containing lipoprotein particles. Finally, APOE also has a heparin-binding activity and binds heparan-sulfate proteoglycans on the surface of cells, a property that supports the capture and the receptor-mediated uptake of APOE-containing lipoproteins by cells. A main function of APOE is to mediate lipoprotein clearance through the uptake of chylomicrons, VLDLs, and HDLs by hepatocytes. APOE is also involved in the biosynthesis by the liver of VLDLs as well as their uptake by peripheral tissues ensuring the delivery of triglycerides and energy storage in muscle, heart and adipose tissues. By participating in the lipoprotein-mediated distribution of lipids among tissues, APOE plays a critical role in plasma and tissues lipid homeostasis. APOE is also involved in two steps of reverse cholesterol transport, the HDLs-mediated transport of cholesterol from peripheral tissues to the liver, and thereby plays an important role in cholesterol homeostasis. First, it is functionally associated with ABCA1 in the biogenesis of HDLs in tissues. Second, it is enriched in circulating HDLs and mediates their uptake by hepatocytes. APOE also plays an important role in lipid transport in the central nervous system, regulating neuron survival and sprouting. The sequence is that of Apolipoprotein E (APOE) from Neomonachus schauinslandi (Hawaiian monk seal).